The following is a 427-amino-acid chain: Peptidyl-prolyl cis-trans isomerase sig-7 (427 aa).

Residues 6–161 (ETTLGDLIID…KDIRISHTIV (156 aa)) form the PPIase cyclophilin-type domain. Residues 195 to 227 (DEKEDEDEGKTAEEIAEELQQREMAEQAQILEM) adopt a coiled-coil conformation. The RRM domain maps to 241–319 (NVLFVCKLNP…RRIHVDFSQS (79 aa)). Polar residues predominate over residues 322-334 (QNYKYKPKSQQQE). The tract at residues 322–427 (QNYKYKPKSQ…RSPDRRRDRR (106 aa)) is disordered. Over residues 351–370 (SHQRSPSPRRRRSPSPKKDK) the composition is skewed to basic residues. A compositionally biased stretch (basic and acidic residues) spans 384-427 (SSDNHRDRDRSYRDNNRDRRDNHRDSDRDRRRHDRSPDRRRDRR).

The protein belongs to the cyclophilin-type PPIase family. PPIL4 subfamily. In terms of assembly, interacts with ama-1, the catalytic subunit of the RNA polymerase II (RNA pol II) complex. As to expression, ubiquitous.

It localises to the nucleus. It is found in the nucleoplasm. The protein resides in the chromosome. It catalyses the reaction [protein]-peptidylproline (omega=180) = [protein]-peptidylproline (omega=0). Functionally, probable PPIase that accelerates the folding of proteins. It catalyzes the cis-trans isomerization of proline imidic peptide bonds in oligopeptides. Involved in RNA polymerase II (RNA pol II)-mediated transcription elongation, and in primary transcript splicing, including co-transcriptional trans-splicing, in association with the catalytic subunit of the RNA pol II complex ama-1. Also plays a role in the regulation of elongation-dependent phosphorylation of ama-1 to control transcription. Involved in the transcription of several genes during embryogenesis and in particular, of genes related to developmental processes such as gastrulation, and also regulates transcription in germ cells from embryogenesis to adulthood. This Caenorhabditis elegans protein is Peptidyl-prolyl cis-trans isomerase sig-7.